The sequence spans 209 residues: Large ribosomal subunit protein uL4 (209 aa).

The tract at residues 46–72 (GTSSTKTRSEVRGSSKKPWKQKGTGRA) is disordered. Basic residues predominate over residues 59–72 (SSKKPWKQKGTGRA).

It belongs to the universal ribosomal protein uL4 family. In terms of assembly, part of the 50S ribosomal subunit.

Its function is as follows. One of the primary rRNA binding proteins, this protein initially binds near the 5'-end of the 23S rRNA. It is important during the early stages of 50S assembly. It makes multiple contacts with different domains of the 23S rRNA in the assembled 50S subunit and ribosome. Functionally, forms part of the polypeptide exit tunnel. This Borreliella burgdorferi (strain ATCC 35210 / DSM 4680 / CIP 102532 / B31) (Borrelia burgdorferi) protein is Large ribosomal subunit protein uL4.